Here is a 466-residue protein sequence, read N- to C-terminus: Secreted RxLR effector protein 101 (466 aa).

The first 21 residues, 1-21 (MRGAYSVITALLVVASSQIAA), serve as a signal peptide directing secretion. Positions 48–63 (RYLRGSQHVHDSNEER) match the RxLR-dEER motif. Disordered stretches follow at residues 99–127 (KMPH…GANA) and 384–405 (RTFN…VRSS). A compositionally biased stretch (basic residues) spans 109–121 (KVSRVTRTGKKMT). The segment covering 385–395 (TFNGNTDTASL) has biased composition (polar residues).

Belongs to the RxLR effector family.

The protein localises to the secreted. Its subcellular location is the host nucleus. In terms of biological role, secreted effector that partially suppresses the host cell death induced by cell death-inducing proteins. The sequence is that of Secreted RxLR effector protein 101 from Plasmopara viticola (Downy mildew of grapevine).